Here is a 605-residue protein sequence, read N- to C-terminus: MNHFPKLLSSQIGFDVAQSMLEYFDRHYRIFREAAVEAKALFERADWHGLQRLARERITSYDERVQECVEVLQDEYDAESIDDEVWQQIKLHYIGLLTSHRQPECAETFFNSVCCKILHRSYFNNDFIFVRPAISTEYLENDEPAAKPTYRAYYPGTDGLAVTLERIVTNFQLEPPFEDLARDIACVMQAIHDEFGRFDEAPNFQIHVLSSLFFRNKSAYIVGRIINADRVLPFAVPIRHVRPGLLALDTVLLRRDLLQIIFSFSHSYFLVDMDVPSAYVDFLCTIMPGKPKAEIYTSVGLQKQGKNLFYRDLLHHLSHSSDRFIVAPGIKGLVMLVFTLPSFPYVFKIIKDHFPPPKETTRRQIMEKYLLVKRHDRLGRMADTLEYSSVALPLARLDHALVRELEKEVPSLLEYEGDNLVIKHLYIERRMTPLNLYLQNGTDAEVEHGVKEYGNAVKELMKANIFPGDMLYKNFGVTRHGRVVFYDYDEIEYLTDCNVRRVPPPRNEEDELSGEPWYTVGPHDIFPETYGPFLLGDPRVRAAFLKHHADFFDPALWQASKDKLLQGELPDFFPYDASLRFCVRYPERFRATDERAPARGAQRAA.

Residues A327–L333 and K348 contribute to the ATP site. D383 is a catalytic residue.

The protein belongs to the AceK family.

It localises to the cytoplasm. It carries out the reaction L-seryl-[isocitrate dehydrogenase] + ATP = O-phospho-L-seryl-[isocitrate dehydrogenase] + ADP + H(+). Bifunctional enzyme which can phosphorylate or dephosphorylate isocitrate dehydrogenase (IDH) on a specific serine residue. This is a regulatory mechanism which enables bacteria to bypass the Krebs cycle via the glyoxylate shunt in response to the source of carbon. When bacteria are grown on glucose, IDH is fully active and unphosphorylated, but when grown on acetate or ethanol, the activity of IDH declines drastically concomitant with its phosphorylation. The sequence is that of Isocitrate dehydrogenase kinase/phosphatase from Burkholderia multivorans (strain ATCC 17616 / 249).